The following is an 89-amino-acid chain: Small ribosomal subunit protein uS15 (89 aa).

This sequence belongs to the universal ribosomal protein uS15 family. In terms of assembly, part of the 30S ribosomal subunit. Forms a bridge to the 50S subunit in the 70S ribosome, contacting the 23S rRNA.

Functionally, one of the primary rRNA binding proteins, it binds directly to 16S rRNA where it helps nucleate assembly of the platform of the 30S subunit by binding and bridging several RNA helices of the 16S rRNA. Its function is as follows. Forms an intersubunit bridge (bridge B4) with the 23S rRNA of the 50S subunit in the ribosome. The sequence is that of Small ribosomal subunit protein uS15 from Anoxybacillus flavithermus (strain DSM 21510 / WK1).